A 262-amino-acid chain; its full sequence is Adenosylcobinamide-GDP ribazoletransferase (262 aa).

The next 8 membrane-spanning stretches (helical) occupy residues A4–W26, C37–S57, F59–A79, V112–Y132, I139–L159, A183–I203, V205–W225, and V237–H257.

The protein belongs to the CobS family. Requires Mg(2+) as cofactor.

The protein localises to the cell membrane. It catalyses the reaction alpha-ribazole + adenosylcob(III)inamide-GDP = adenosylcob(III)alamin + GMP + H(+). It carries out the reaction alpha-ribazole 5'-phosphate + adenosylcob(III)inamide-GDP = adenosylcob(III)alamin 5'-phosphate + GMP + H(+). It participates in cofactor biosynthesis; adenosylcobalamin biosynthesis; adenosylcobalamin from cob(II)yrinate a,c-diamide: step 7/7. In terms of biological role, joins adenosylcobinamide-GDP and alpha-ribazole to generate adenosylcobalamin (Ado-cobalamin). Also synthesizes adenosylcobalamin 5'-phosphate from adenosylcobinamide-GDP and alpha-ribazole 5'-phosphate. In Geobacillus kaustophilus (strain HTA426), this protein is Adenosylcobinamide-GDP ribazoletransferase.